A 391-amino-acid chain; its full sequence is Alkanesulfonate monooxygenase (391 aa).

The protein belongs to the SsuD family.

It carries out the reaction an alkanesulfonate + FMNH2 + O2 = an aldehyde + FMN + sulfite + H2O + 2 H(+). Functionally, catalyzes the desulfonation of aliphatic sulfonates. This Paracidovorax citrulli (strain AAC00-1) (Acidovorax citrulli) protein is Alkanesulfonate monooxygenase.